Consider the following 301-residue polypeptide: GTPase Era (301 aa).

Positions 6–173 constitute an Era-type G domain; that stretch reads KSGFVAIVGR…LEQTNANLEI (168 aa). The interval 14-21 is G1; it reads GRPNVGKS. A GTP-binding site is contributed by 14–21; it reads GRPNVGKS. The tract at residues 40 to 44 is G2; the sequence is QTTRN. The segment at 61 to 64 is G3; sequence DTPG. Residues 61-65 and 123-126 contribute to the GTP site; these read DTPGI and NKID. Residues 123 to 126 are G4; it reads NKID. Positions 152 to 154 are G5; it reads ISA. The KH type-2 domain occupies 204–282; it reads TREEVPHSVA…FLEVWVKVQK (79 aa).

This sequence belongs to the TRAFAC class TrmE-Era-EngA-EngB-Septin-like GTPase superfamily. Era GTPase family. As to quaternary structure, monomer.

Its subcellular location is the cytoplasm. It is found in the cell membrane. An essential GTPase that binds both GDP and GTP, with rapid nucleotide exchange. Plays a role in 16S rRNA processing and 30S ribosomal subunit biogenesis and possibly also in cell cycle regulation and energy metabolism. The sequence is that of GTPase Era from Listeria monocytogenes serotype 4a (strain HCC23).